The following is a 454-amino-acid chain: MEIDTDYLGSILMDIEDRVEYADIRAGTSRTSSILMKDGKLQEVKSGRASGFRIRVLRNGSWGFAFTDEPSRLGEMALKAIKMTGSLRGDVQVGSGAPSVDKTMVRSSRPPSDVPAAEKRELVSDAHHAASVDGVVSTTVSYVDMESSSAFLNSEGSLIEMAETRVALFLNAVASDGSGIQFGHKSCGGTGGFEILEREDIEELGRRTGEKAVRLLKASPPPSGRFDIVTDPELTGVFIHEALGHAAEADLILQGDSILEGKLGEKIASEGVTIIDDPTIDGFGSYSYDAEGVRAAETVLVENGVLTSLLNSRETAFKLGLEPSGNARSAIGDQPIVRMSNTYLKPGDLSFDELIEDIRNGVYLRGSRGGQVDTGKGIFQFNAAESFRIQDGEIAEPVKDVSLSGNVLETLKNVDGVGSDFRLGIGFCGKSGQSVPVGDGGPHVRIRNAMVGGT.

Residues 92–115 (QVGSGAPSVDKTMVRSSRPPSDVP) form a disordered region.

It belongs to the peptidase U62 family.

In terms of biological role, probable metalloprotease. The protein is Metalloprotease MTH_856 of Methanothermobacter thermautotrophicus (strain ATCC 29096 / DSM 1053 / JCM 10044 / NBRC 100330 / Delta H) (Methanobacterium thermoautotrophicum).